We begin with the raw amino-acid sequence, 420 residues long: UDP-N-acetylglucosamine 1-carboxyvinyltransferase (420 aa).

22 to 23 (KN) provides a ligand contact to phosphoenolpyruvate. Arg93 contacts UDP-N-acetyl-alpha-D-glucosamine. Cys117 (proton donor) is an active-site residue. Cys117 bears the 2-(S-cysteinyl)pyruvic acid O-phosphothioketal mark. Asp307 and Val329 together coordinate UDP-N-acetyl-alpha-D-glucosamine.

It belongs to the EPSP synthase family. MurA subfamily.

It localises to the cytoplasm. It catalyses the reaction phosphoenolpyruvate + UDP-N-acetyl-alpha-D-glucosamine = UDP-N-acetyl-3-O-(1-carboxyvinyl)-alpha-D-glucosamine + phosphate. It functions in the pathway cell wall biogenesis; peptidoglycan biosynthesis. In terms of biological role, cell wall formation. Adds enolpyruvyl to UDP-N-acetylglucosamine. This is UDP-N-acetylglucosamine 1-carboxyvinyltransferase from Marinobacter nauticus (strain ATCC 700491 / DSM 11845 / VT8) (Marinobacter aquaeolei).